Here is a 206-residue protein sequence, read N- to C-terminus: HTH-type transcriptional regulator Hpr (206 aa).

In terms of domain architecture, HTH marR-type spans 13 to 157 (ALLFSQRMAQ…MMCIIRNIYG (145 aa)). Residues 63–86 (ISEIAKFGVMHVSTAFNFSKKLEE) constitute a DNA-binding region (H-T-H motif). Positions 186-206 (SEELEDSADAAEKAAKANQIV) are disordered.

Homodimer.

Functionally, negative regulator of protease production and sporulation. The protein is HTH-type transcriptional regulator Hpr of Bacillus pumilus (strain SAFR-032).